Consider the following 207-residue polypeptide: MESSRRPLGLTKPSVDQIIKIEAEGISQSRLQLLNPIPGVWFPITLGFRALPNFRREKSFSLHKDRECLLPTESQLQSKRDIGIDTTDGLLKHLMASRSSYCPDGIFTILEQGPMLAQSMATISTELSGSQANRPTLRPLPILLKGTQVAMRLFLLGLRPVRYCLKVFMLKAQEGLHLLVDLVRGHNPVGQIIALEAAPTSASLPLL.

This sequence belongs to the coronavirus I protein family.

It is found in the virion. In terms of biological role, structural protein that is not essential for the viral replication either in tissue culture or in its natural host. In Murine coronavirus (strain 1) (MHV-1), this protein is Protein I (N).